Consider the following 811-residue polypeptide: Transmembrane protease serine 6 (811 aa).

The Cytoplasmic portion of the chain corresponds to 1 to 55 (MLLLFHSKRMPVAEAPQVAGGQGDGGDGEEAEPEGMFKACEDSKRKARGYLRLVP). A helical; Signal-anchor for type II membrane protein transmembrane segment spans residues 56-76 (LFVLLALLVLASAGVLLWYFL). Residues 77–811 (GYKAEVMVSQ…VISWIQQVVT (735 aa)) lie on the Extracellular side of the membrane. In terms of domain architecture, SEA spans 84 to 209 (VSQVYSGSLR…EGLVILEASV (126 aa)). Residues Asn-136, Asn-184, Asn-216, Asn-338, Asn-433, and Asn-453 are each glycosylated (N-linked (GlcNAc...) asparagine). 2 consecutive CUB domains span residues 213–336 (AALN…QACE) and 335–452 (CEVN…YGLY). Cys-335 and Cys-366 are disulfide-bonded. 3 LDL-receptor class A domains span residues 457 to 489 (PCPG…ERNC), 490 to 526 (VCRA…EQCQ), and 530 to 567 (PCGT…EHCD). Cystine bridges form between Cys-458–Cys-470, Cys-464–Cys-480, Cys-474–Cys-489, Cys-491–Cys-503, Cys-497–Cys-516, Cys-510–Cys-525, Cys-531–Cys-543, Cys-538–Cys-557, Cys-551–Cys-566, and Cys-602–Cys-618. Asn-518 is a glycosylation site (N-linked (GlcNAc...) asparagine). In terms of domain architecture, Peptidase S1 spans 577-811 (IVGGAVSSEG…VISWIQQVVT (235 aa)). Active-site charge relay system residues include His-617 and Asp-668. Intrachain disulfides connect Cys-702-Cys-768, Cys-733-Cys-747, and Cys-758-Cys-787. Ser-762 acts as the Charge relay system in catalysis.

The protein belongs to the peptidase S1 family. In terms of assembly, interacts with HJV. In terms of processing, the single-chain zymogen undergoes autoproteolytic processing. This results in TMPRSS6 shedding from the cell surface and conversion into an activated two-chains form which is released extracellularly. The process involves a trans-activation mechanism that requires TMPRSS6 oligomerization.

It localises to the cell membrane. Its function is as follows. Membrane-bound serine protease. Through the cleavage of cell surface hemojuvelin (HJV), a regulator of the expression of the iron absorption-regulating hormone hepicidin/HAMP, plays a role in iron homeostasis. The chain is Transmembrane protease serine 6 (TMPRSS6) from Homo sapiens (Human).